The primary structure comprises 263 residues: tRNA dimethylallyltransferase (263 aa).

This sequence belongs to the IPP transferase family. In terms of assembly, monomer. It depends on Mg(2+) as a cofactor.

The enzyme catalyses adenosine(37) in tRNA + dimethylallyl diphosphate = N(6)-dimethylallyladenosine(37) in tRNA + diphosphate. Catalyzes the transfer of a dimethylallyl group onto the adenine at position 37 in tRNAs that read codons beginning with uridine, leading to the formation of N6-(dimethylallyl)adenosine (i(6)A). This Leifsonia xyli subsp. xyli (strain CTCB07) protein is tRNA dimethylallyltransferase.